Consider the following 518-residue polypeptide: Putative succinate-semialdehyde dehydrogenase [NADP(+)] 2 (518 aa).

NADP(+)-binding positions include 157–158 (WN), 181–184 (KPDS), and 232–233 (GS). Catalysis depends on glutamate 254, which acts as the Proton acceptor. Residue leucine 255 coordinates NADP(+). The Nucleophile role is filled by cysteine 288. Glutamate 386 is an NADP(+) binding site.

It belongs to the aldehyde dehydrogenase family.

The catalysed reaction is succinate semialdehyde + NADP(+) + H2O = succinate + NADPH + 2 H(+). Catalyzes the NADP(+)-dependent oxidation of succinate semialdehyde to succinate. Although it has succinate semialdehyde dehydrogenase activity, is likely to act physiologically on a different aldehyde(s). The chain is Putative succinate-semialdehyde dehydrogenase [NADP(+)] 2 (gabD2) from Mycobacterium bovis (strain ATCC BAA-935 / AF2122/97).